The chain runs to 789 residues: Bifunctional purine biosynthetic protein PUR2,5 (789 aa).

Residues 1–428 form a GARS region; sequence MEKINVLVVG…NRTDIAHRAF (428 aa). The ATP-grasp domain maps to 114–321; the sequence is KDFMKKHNIP…LLELMLATVE (208 aa). 140 to 201 contacts ATP; sequence IANSSHNLVI…EEFLEGDELS (62 aa). Mg(2+)-binding residues include Glu-291 and Asn-293. The segment at 438 to 773 is AIRS; that stretch reads LTYEDAGVSV…TVYTIGKLVE (336 aa).

It in the N-terminal section; belongs to the GARS family. The protein in the C-terminal section; belongs to the AIR synthase family. The cofactor is Mg(2+). Requires Mn(2+) as cofactor.

It is found in the cytoplasm. The protein localises to the cytosol. It catalyses the reaction 2-formamido-N(1)-(5-O-phospho-beta-D-ribosyl)acetamidine + ATP = 5-amino-1-(5-phospho-beta-D-ribosyl)imidazole + ADP + phosphate + H(+). The catalysed reaction is 5-phospho-beta-D-ribosylamine + glycine + ATP = N(1)-(5-phospho-beta-D-ribosyl)glycinamide + ADP + phosphate + H(+). It participates in purine metabolism; IMP biosynthesis via de novo pathway; 5-amino-1-(5-phospho-D-ribosyl)imidazole from N(2)-formyl-N(1)-(5-phospho-D-ribosyl)glycinamide: step 2/2. Its pathway is purine metabolism; IMP biosynthesis via de novo pathway; N(1)-(5-phospho-D-ribosyl)glycinamide from 5-phospho-alpha-D-ribose 1-diphosphate: step 2/2. Functionally, catalyzes the second and fifth step in the 'de novo' purine biosynthesis pathway; contains phosphoribosylamine--glycine ligase (GARS) and phosphoribosylformylglycinamidine cyclo-ligase (AIRS) activities. In Pichia angusta (Yeast), this protein is Bifunctional purine biosynthetic protein PUR2,5.